We begin with the raw amino-acid sequence, 196 residues long: 7-methyl-GTP pyrophosphatase (196 aa).

The active-site Proton acceptor is the Asp-69.

The protein belongs to the Maf family. YceF subfamily. Requires a divalent metal cation as cofactor.

It is found in the cytoplasm. It carries out the reaction N(7)-methyl-GTP + H2O = N(7)-methyl-GMP + diphosphate + H(+). Nucleoside triphosphate pyrophosphatase that hydrolyzes 7-methyl-GTP (m(7)GTP). May have a dual role in cell division arrest and in preventing the incorporation of modified nucleotides into cellular nucleic acids. In Photorhabdus laumondii subsp. laumondii (strain DSM 15139 / CIP 105565 / TT01) (Photorhabdus luminescens subsp. laumondii), this protein is 7-methyl-GTP pyrophosphatase.